A 1178-amino-acid chain; its full sequence is Pyruvate carboxylase 1 (1178 aa).

In terms of domain architecture, Biotin carboxylation spans 18–470; that stretch reads EKNKILVANR…WTTFIDDTPQ (453 aa). ATP-binding residues include K136, E220, and H255. The ATP-grasp domain maps to 140 to 337; that stretch reads RNLAAKANVP…IVAAQIQIAA (198 aa). The active site involves R312. The region spanning 557–824 is the Pyruvate carboxyltransferase domain; it reads TLLMDTTWRD…DTGINVEHVR (268 aa). Residues 565 to 569 and R638 each bind substrate; that span reads RDAHQ. D566 provides a ligand contact to a divalent metal cation. A divalent metal cation-binding residues include K734, H764, and H766. N6-carboxylysine is present on K734. Position 898 (T898) interacts with substrate. A Biotinyl-binding domain is found at 1094-1169; sequence KADMHDPLHI…DSSDLLVLLE (76 aa). Residue K1135 is modified to N6-biotinyllysine.

In terms of assembly, homotetramer. Requires biotin as cofactor. It depends on Zn(2+) as a cofactor.

The protein resides in the cytoplasm. It carries out the reaction hydrogencarbonate + pyruvate + ATP = oxaloacetate + ADP + phosphate + H(+). The protein operates within carbohydrate biosynthesis; gluconeogenesis. Its function is as follows. Pyruvate carboxylase catalyzes a 2-step reaction, involving the ATP-dependent carboxylation of the covalently attached biotin in the first step and the transfer of the carboxyl group to pyruvate in the second. The protein is Pyruvate carboxylase 1 (PYC1) of Saccharomyces cerevisiae (strain ATCC 204508 / S288c) (Baker's yeast).